We begin with the raw amino-acid sequence, 156 residues long: Arginine repressor (156 aa).

It belongs to the ArgR family.

The protein localises to the cytoplasm. The protein operates within amino-acid biosynthesis; L-arginine biosynthesis [regulation]. Functionally, regulates arginine biosynthesis genes. The sequence is that of Arginine repressor from Photorhabdus laumondii subsp. laumondii (strain DSM 15139 / CIP 105565 / TT01) (Photorhabdus luminescens subsp. laumondii).